The sequence spans 299 residues: Bifunctional protein FolD (299 aa).

NADP(+) contacts are provided by residues 169 to 171 (GRS), S194, and I235.

It belongs to the tetrahydrofolate dehydrogenase/cyclohydrolase family. As to quaternary structure, homodimer.

The catalysed reaction is (6R)-5,10-methylene-5,6,7,8-tetrahydrofolate + NADP(+) = (6R)-5,10-methenyltetrahydrofolate + NADPH. It carries out the reaction (6R)-5,10-methenyltetrahydrofolate + H2O = (6R)-10-formyltetrahydrofolate + H(+). Its pathway is one-carbon metabolism; tetrahydrofolate interconversion. Catalyzes the oxidation of 5,10-methylenetetrahydrofolate to 5,10-methenyltetrahydrofolate and then the hydrolysis of 5,10-methenyltetrahydrofolate to 10-formyltetrahydrofolate. In Trichormus variabilis (strain ATCC 29413 / PCC 7937) (Anabaena variabilis), this protein is Bifunctional protein FolD.